The primary structure comprises 157 residues: Protein Smg homolog (157 aa).

This sequence belongs to the Smg family.

This is Protein Smg homolog from Shewanella halifaxensis (strain HAW-EB4).